Reading from the N-terminus, the 89-residue chain is UPF0335 protein Caul_0876 (89 aa).

The protein belongs to the UPF0335 family.

The chain is UPF0335 protein Caul_0876 from Caulobacter sp. (strain K31).